The primary structure comprises 274 residues: Bis(5'-nucleosyl)-tetraphosphatase, symmetrical (274 aa).

Belongs to the Ap4A hydrolase family.

It catalyses the reaction P(1),P(4)-bis(5'-adenosyl) tetraphosphate + H2O = 2 ADP + 2 H(+). Functionally, hydrolyzes diadenosine 5',5'''-P1,P4-tetraphosphate to yield ADP. The sequence is that of Bis(5'-nucleosyl)-tetraphosphatase, symmetrical from Shewanella sediminis (strain HAW-EB3).